The primary structure comprises 145 residues: uncharacterized protein (145 aa).

The chain crosses the membrane as a helical span at residues 97–117 (ISMLLLIVIIAIGLTISYMVI).

It localises to the membrane. This is an uncharacterized protein from Methanocaldococcus jannaschii (strain ATCC 43067 / DSM 2661 / JAL-1 / JCM 10045 / NBRC 100440) (Methanococcus jannaschii).